The chain runs to 951 residues: Cadmium/zinc-transporting ATPase HMA2 (951 aa).

Residues 1–83 lie on the Cytoplasmic side of the membrane; that stretch reads MASKKMTKSY…VRVTGETNFK (83 aa). One can recognise an HMA domain in the interval 7–73; the sequence is TKSYFDVLGI…ALNQAQLEAN (67 aa). The helical transmembrane segment at 84 to 105 threads the bilayer; it reads NKWPSPFAVVSGILLLLSFFKY. Topologically, residues 106 to 108 are extracellular; sequence LYS. The helical transmembrane segment at 109–128 threads the bilayer; the sequence is PFRWLAVAAVVAGIYPILAK. Residues 129-135 lie on the Cytoplasmic side of the membrane; it reads AVASLAR. Residues 136 to 156 traverse the membrane as a helical segment; that stretch reads FRIDINILVVVTVGATIGMQD. Residue Tyr157 is a topological domain, extracellular. A helical transmembrane segment spans residues 158–178; that stretch reads TEAAVVVFLFTIAEWLQSRAS. The Cytoplasmic portion of the chain corresponds to 179 to 304; that stretch reads YKASAVMQSL…KTETQRFIDK (126 aa). The chain crosses the membrane as a helical span at residues 305–327; it reads CSKYYTPAIILISICFVAIPFAL. At 328-335 the chain is on the extracellular side; it reads KVHNLKHW. A helical membrane pass occupies residues 336–353; the sequence is VHLALVVLVSACPCGLIL. Residues 354–647 lie on the Cytoplasmic side of the membrane; it reads STPVATFCAL…KLAKRAKRKV (294 aa). Asp391 acts as the 4-aspartylphosphate intermediate in catalysis. Mg(2+) is bound by residues Asp592 and Asp596. Residues 648 to 667 traverse the membrane as a helical segment; that stretch reads VENVVISITMKGAILALAFA. Residues 668–671 are Extracellular-facing; it reads GHPL. The helical transmembrane segment at 672-691 threads the bilayer; it reads IWAAVLADVGTCLLVILNSM. Over 692–951 the chain is Cytoplasmic; sequence LLLSDKHKTG…VGTLKEIVIE (260 aa). The segment covering 841-851 has biased composition (basic and acidic residues); that stretch reads ELQQSCHDKPS. A disordered region spans residues 841 to 866; that stretch reads ELQQSCHDKPSGLDIGTGPKHEGSST.

Belongs to the cation transport ATPase (P-type) (TC 3.A.3) family. Type IB subfamily. Predominantly expressed in the vascular tissues of roots, stems, and leaves. Also detected in developing anthers.

It is found in the cell membrane. It carries out the reaction Zn(2+)(in) + ATP + H2O = Zn(2+)(out) + ADP + phosphate + H(+). The enzyme catalyses Cd(2+)(in) + ATP + H2O = Cd(2+)(out) + ADP + phosphate + H(+). Plays an important role in zinc transport and homeostasis. Could also be involved in cadmium detoxification. The protein is Cadmium/zinc-transporting ATPase HMA2 (HMA2) of Arabidopsis thaliana (Mouse-ear cress).